The following is an 876-amino-acid chain: Leucine--tRNA ligase (876 aa).

The short motif at 42–52 (PYPSGKLHMGH) is the 'HIGH' region element. A 'KMSKS' region motif is present at residues 634 to 638 (KMGKS). K637 is a binding site for ATP.

Belongs to the class-I aminoacyl-tRNA synthetase family.

The protein localises to the cytoplasm. It carries out the reaction tRNA(Leu) + L-leucine + ATP = L-leucyl-tRNA(Leu) + AMP + diphosphate. The chain is Leucine--tRNA ligase from Variovorax paradoxus (strain S110).